A 181-amino-acid chain; its full sequence is Ribulose bisphosphate carboxylase small subunit, chloroplastic 2 (181 aa).

The transit peptide at 1 to 54 directs the protein to the chloroplast; that stretch reads MASSMLSSAAVVTSPAQATMVAPFTGLKSSAAFPVTRKANNDITSIASNGGRVS.

This sequence belongs to the RuBisCO small chain family. As to quaternary structure, heterohexadecamer of 8 large and 8 small subunits.

It localises to the plastid. Its subcellular location is the chloroplast. Functionally, ruBisCO catalyzes two reactions: the carboxylation of D-ribulose 1,5-bisphosphate, the primary event in carbon dioxide fixation, as well as the oxidative fragmentation of the pentose substrate. Both reactions occur simultaneously and in competition at the same active site. Although the small subunit is not catalytic it is essential for maximal activity. The chain is Ribulose bisphosphate carboxylase small subunit, chloroplastic 2 from Brassica napus (Rape).